A 2136-amino-acid chain; its full sequence is Methylcytosine dioxygenase TET1 (2136 aa).

2 stretches are compositionally biased toward basic residues: residues 1 to 12 (MSRSRHARPSRL) and 20 to 31 (KKKKNSQLRKTT). Residues 1–47 (MSRSRHARPSRLVRKEDVNKKKKNSQLRKTTKGANKNVASVKTLSPG) form a disordered region. Positions 32–43 (KGANKNVASVKT) are enriched in polar residues. The tract at residues 528–674 (LGIAQLSQAG…NGPKSESMDY (147 aa)) is sufficient for binding to genomic CpG islands. The CXXC-type zinc-finger motif lies at 584 to 625 (EKKKRKRCGVCEPCQQKTNCGECTYCKNRKNSHQICKKRKCE). Positions 591, 594, 597, 603, 606, 609, 619, and 624 each coordinate Zn(2+). 3 stretches are compositionally biased toward basic and acidic residues: residues 712–724 (QNKK…HVKG), 732–743 (EAEKSKNSEVDK), and 849–869 (IHNE…EPKD). Disordered stretches follow at residues 712-746 (QNKK…KKRT), 849-876 (IHNE…VQPS), 899-923 (QLSE…EQRT), and 1119-1169 (EKGT…VSYQ). Serine 871 carries the post-translational modification Phosphoserine. Residues 901 to 911 (SEAPSENSSPS) are compositionally biased toward low complexity. Over residues 1119 to 1139 (EKGTIQQKPPSSVHNNHGSSL) the composition is skewed to polar residues. A compositionally biased stretch (basic residues) spans 1146–1163 (TQKKTKSTPSRDRRKKKP). 5 residues coordinate Zn(2+): cysteine 1422, cysteine 1424, cysteine 1482, histidine 1508, and cysteine 1510. Arginine 1551 contacts 2-oxoglutarate. Cysteine 1561, cysteine 1563, cysteine 1579, and cysteine 1588 together coordinate Zn(2+). The tract at residues 1580–1593 (SWSMYFNGCKFGRS) is interaction with DNA. Residue lysine 1589 forms a Glycyl lysine isopeptide (Lys-Gly) (interchain with G-Cter in ubiquitin) linkage. Residue cysteine 1648 coordinates Zn(2+). Cysteine 1664 is a binding site for 2-oxoglutarate. Histidine 1670 is a binding site for Zn(2+). Residues histidine 1672 and aspartate 1674 each coordinate Fe cation. A substrate-binding site is contributed by asparagine 1677. Position 1706 (histidine 1706) interacts with 2-oxoglutarate. 2 disordered regions span residues 1774–1897 (EKKP…AAAD) and 1919–1984 (EPLI…SPAE). The span at 1786–1800 (NSTTTNNSKPSSLPT) shows a compositional bias: low complexity. Composition is skewed to polar residues over residues 1824–1833 (SSDNTKTYSL) and 1937–1953 (HQPN…QDLA). The segment covering 1957-1976 (MEEDEQHSEADEPPSDEPLS) has biased composition (acidic residues). Histidine 2028 contacts Fe cation. 2043–2045 (RLS) serves as a coordination point for 2-oxoglutarate. 2049-2051 (YQH) contributes to the substrate binding site. Residue histidine 2059 participates in Zn(2+) binding. The segment covering 2074–2087 (KNKKMKASEQKDQA) has biased composition (basic and acidic residues). A disordered region spans residues 2074–2100 (KNKKMKASEQKDQAANEGPEQSSEVNE).

Belongs to the TET family. In terms of assembly, interacts with SIN3A; recruits the transcriptional corepressor SIN3A to gene promoters. Interacts with HCFC1. Interacts (via C-terminus) with OGT. Found in a complex composed of at least SINHCAF, SIN3A, HDAC1, SAP30, RBBP4, OGT and TET1. Interacts with QSER1. Interacts with NONO (via DNA-binding domain); this interaction recruits TET1 to genomic loci. Interacts with FOXA2; this interaction may recruit TET1 to specific enhancers to preserve their unmethylated status and hence allowing gene expression. Interacts with RNF2. Directly interacts (via C-terminus) with the DCAF1 component of the CRL4(VprBP) E3 ubiquitin-protein ligase complex. As to quaternary structure, interacts with UHRF1; this interaction induces the recruitment of TET1 to replicating heterochromatin. Interacts with DCAF1. Fe(2+) serves as cofactor. It depends on Zn(2+) as a cofactor. Glycosylated. Interaction with OGT leads to GlcNAcylation. Post-translationally, monoubiquitinated at Lys-1589 by the DCX (DDB1-CUL4-X-box) E3 ubiquitin-protein ligase complex called CRL4(VprBP) or CUL4A-RBX1-DDB1-DCAF1/VPRBP complex; this modification promotes binding to DNA. In terms of tissue distribution, expressed in fetal heart, lung and brain, and in adult skeletal muscle, thymus and ovary. Not detected in adult heart, lung or brain. Up-regulated in glioblastoma cells (at protein level). Expressed in embryonic stem cells (at protein level).

It localises to the nucleus. It is found in the chromosome. The enzyme catalyses a 5-methyl-2'-deoxycytidine in DNA + 2-oxoglutarate + O2 = a 5-hydroxymethyl-2'-deoxycytidine in DNA + succinate + CO2. It catalyses the reaction a 5-hydroxymethyl-2'-deoxycytidine in DNA + 2-oxoglutarate + O2 = a 5-formyl-2'-deoxycytidine in DNA + succinate + CO2 + H2O. It carries out the reaction a 5-formyl-2'-deoxycytidine in DNA + 2-oxoglutarate + O2 = a 5-carboxyl-2'-deoxycytidine in DNA + succinate + CO2 + H(+). Its function is as follows. Dioxygenase that plays a key role in active DNA demethylation, by catalyzing the sequential oxidation of the modified genomic base 5-methylcytosine (5mC) into 5-hydroxymethylcytosine (5hmC), 5-formylcytosine (5fC), and 5-carboxylcytosine (5caC). In addition to its role in DNA demethylation, plays a more general role in chromatin regulation by recruiting histone modifying protein complexes to alter histone marks and chromatin accessibility, leading to both activation and repression of gene expression. Plays therefore a role in many biological processes, including stem cell maintenance, T- and B-cell development, inflammation regulation, genomic imprinting, neural activity or DNA repair. Involved in the balance between pluripotency and lineage commitment of cells and plays a role in embryonic stem cells maintenance and inner cell mass cell specification. Together with QSER1, plays an essential role in the protection and maintenance of transcriptional and developmental programs to inhibit the binding of DNMT3A/3B and therefore de novo methylation. May play a role in pancreatic beta-cell specification during development. In this context, may function as an upstream epigenetic regulator of PAX4 presumably through direct recruitment by FOXA2 to a PAX4 enhancer to preserve its unmethylated status, thereby potentiating PAX4 expression to adopt beta-cell fate during endocrine lineage commitment. Under DNA hypomethylation conditions, such as in female meiotic germ cells, may induce epigenetic reprogramming of pericentromeric heterochromatin (PCH), the constitutive heterochromatin of pericentromeric regions. PCH forms chromocenters in the interphase nucleus and chromocenters cluster at the prophase of meiosis. In this context, may also be essential for chromocenter clustering in a catalytic activity-independent manner, possibly through the recruitment polycomb repressive complex 1 (PRC1) to the chromocenters. During embryonic development, may be required for normal meiotic progression in oocytes and meiotic gene activation. Binds preferentially to DNA containing cytidine-phosphate-guanosine (CpG) dinucleotides over CpH (H=A, T, and C), hemimethylated-CpG and hemimethylated-hydroxymethyl-CpG. Functionally, dioxygenase that plays a key role in active DNA demethylation. Binds to promoters, particularly to those with high CG content. In hippocampal neurons, isoform 1 regulates the expression of a unique subset of genes compared to isoform 2, although some overlap exists between both isoforms, hence differentially regulates excitatory synaptic transmission. In hippocampal neuron cell cultures, isoform 1 controls both miniature excitatory postsynaptic current amplitude and frequency. Isoform 1 may regulate genes involved in hippocampal-dependent memory, leading to positive regulation of memory, contrary to isoform 2 that may decrease memory. Dioxygenase that plays a key role in active DNA demethylation. As isoform 1, binds to promoters, particularly to those with high CG content, however displays reduced global chromatin affinity compared with isoform 1, leading to decreased global DNA demethylation compared with isoform 1. Contrary to isoform 1, isoform 2 localizes during S phase to sites of ongoing DNA replication in heterochromatin, causing a significant de novo 5hmC formation, globally, and more so in heterochromatin, including LINE 1 interspersed DNA repeats leading to their activation. In hippocampal neurons, isoform 2 regulates the expression of a unique subset of genes compared to isoform 1, although some overlap between both isoforms, hence differentially regulates excitatory synaptic transmission. In hippocampal neuron cell cultures, isoform 2 controls miniature excitatory postsynaptic current frequency, but not amplitude. Isoform 2 may regulate genes involved in hippocampal-dependent memory, leading to negative regulation of memory, contrary to isoform 1 that may improve memory. In immature and partially differentiated gonadotrope cells, directly represses luteinizing hormone gene LHB expression and does not catalyze 5hmC at the gene promoter. This Homo sapiens (Human) protein is Methylcytosine dioxygenase TET1.